The following is a 574-amino-acid chain: Pescadillo homolog (574 aa).

The interval 289–312 (PSEPNDDTEVDEFPADPENAGLEE) is disordered. Over residues 292–303 (PNDDTEVDEFPA) the composition is skewed to acidic residues. The 94-residue stretch at 323–416 (KHKSLFVGLK…LLLPVEDYFP (94 aa)) folds into the BRCT domain. Residues 452-486 (LGLDEEDDDDDDDDEEEDDDDDEEEEDKKLRQLEN) are disordered. A compositionally biased stretch (acidic residues) spans 453–477 (GLDEEDDDDDDDDEEEDDDDDEEEE).

Belongs to the pescadillo family. As to quaternary structure, component of the PeBoW complex, composed of bop1, pes1 and wdr12. The complex is held together by bop1, which interacts with pes1 via its N-terminal domain and with wdr12 via a high-affinity interaction between the seven-bladed beta-propeller domains of the 2 proteins. The PeBoW complex associates with the 66S pre-ribosome.

It is found in the nucleus. Its subcellular location is the nucleolus. The protein resides in the nucleoplasm. Functionally, component of the PeBoW complex, which is required for maturation of 28S and 5.8S ribosomal RNAs and formation of the 60S ribosome. Required for neural crest migration and eye development. This Xenopus laevis (African clawed frog) protein is Pescadillo homolog (pes1).